A 141-amino-acid polypeptide reads, in one-letter code: Large ribosomal subunit protein uL16 (141 aa).

The protein belongs to the universal ribosomal protein uL16 family. In terms of assembly, part of the 50S ribosomal subunit.

Binds 23S rRNA and is also seen to make contacts with the A and possibly P site tRNAs. This is Large ribosomal subunit protein uL16 from Campylobacter concisus (strain 13826).